Here is a 564-residue protein sequence, read N- to C-terminus: Pestheic acid cluster transcriptional regulator 3 (564 aa).

The segment at residues 11–38 (CWTCRLRRKKCDEGKPECTTCQALSITC) is a DNA-binding region (zn(2)-C6 fungal-type). Positions 71 to 123 (RTSSRYRVPPGQKANPKLAPKVHAAASTPSTNTSHSTETTPPSDNGFYDTAES) are disordered. Positions 97 to 113 (STPSTNTSHSTETTPPS) are enriched in polar residues.

Its subcellular location is the nucleus. Functionally, transcription factor that, with ptaR1 and ptaR2, coregulates the expression of the gene cluster that mediates the biosynthesis of pestheic acid, a diphenyl ether which is a biosynthetic precursor of the unique chloropupukeananes. This chain is Pestheic acid cluster transcriptional regulator 3, found in Pestalotiopsis fici (strain W106-1 / CGMCC3.15140).